A 1141-amino-acid chain; its full sequence is DNA polymerase II large subunit (1141 aa).

Positions 567–587 are disordered; that stretch reads AGTRVGGRMGRPGKSAPRKMK.

This sequence belongs to the archaeal DNA polymerase II family. Heterodimer of a large subunit and a small subunit.

It catalyses the reaction DNA(n) + a 2'-deoxyribonucleoside 5'-triphosphate = DNA(n+1) + diphosphate. The enzyme catalyses Exonucleolytic cleavage in the 3'- to 5'-direction to yield nucleoside 5'-phosphates.. Its function is as follows. Possesses two activities: a DNA synthesis (polymerase) and an exonucleolytic activity that degrades single-stranded DNA in the 3'- to 5'-direction. Has a template-primer preference which is characteristic of a replicative DNA polymerase. This chain is DNA polymerase II large subunit, found in Methanocorpusculum labreanum (strain ATCC 43576 / DSM 4855 / Z).